Reading from the N-terminus, the 740-residue chain is Death domain-associated protein 6 (740 aa).

The interval 1–55 (MATANSIIVLDDDDEDEAAAQPGPSHPLPNAASPGAEAPSSSEPHGARGSSSSGG) is disordered. Positions 1-160 (MATANSIIVL…TSNEPSGNNP (160 aa)) are necessary for interaction with USP7 and ATRX. A Phosphoserine modification is found at Ser-25. Residues 29–55 (PNAASPGAEAPSSSEPHGARGSSSSGG) show a composition bias toward low complexity. Lys-142 participates in a covalent cross-link: Glycyl lysine isopeptide (Lys-Gly) (interchain with G-Cter in SUMO2). The segment at 147-185 (PAATTSNEPSGNNPPTHLSLDPTNAENTASQSPRTRGSR) is disordered. Positions 149-181 (ATTSNEPSGNNPPTHLSLDPTNAENTASQSPRT) are enriched in polar residues. Ser-178 and Ser-213 each carry phosphoserine. Coiled coils occupy residues 180 to 217 (RTRG…ELDD) and 358 to 399 (ARRL…ARLQ). An interaction with histone H3.3 region spans residues 183–417 (GSRRQIQRLE…TPEASLDSGE (235 aa)). Residues 347-570 (GVDPALSDPV…SPVSQLFELE (224 aa)) are necessary for interaction with USP7. The disordered stretch occupies residues 384-724 (DKSEEGERKK…PRPGTCKTSV (341 aa)). Positions 391-395 (RKKRR) match the Nuclear localization signal motif. Ser-412 and Ser-424 each carry phosphoserine. The stretch at 430–489 (ASRAETDDEDDEESDEEEEEEEEEEEEEATDSEEEEDLEQMQEGQEDDEEEDEEEEAAAG) forms a coiled coil. A compositionally biased stretch (acidic residues) spans 435–486 (TDDEDDEESDEEEEEEEEEEEEEATDSEEEEDLEQMQEGQEDDEEEDEEEEA). Residue Thr-459 is modified to Phosphothreonine. Phosphoserine is present on residues Ser-495 and Ser-498. The segment covering 496-505 (PMSSLQISNE) has biased composition (polar residues). An interaction with MAP3K5 region spans residues 501-625 (QISNEKNLEP…GVSPHNWGDS (125 aa)). An N6-acetyllysine modification is found at Lys-512. Positions 514-524 (ISRSSGEQQNK) are enriched in polar residues. The span at 529–542 (SPSLLSEEPLAPSS) shows a compositional bias: low complexity. Acidic residues predominate over residues 551-561 (QPEELTLEEES). A phosphoserine mark is found at Ser-561 and Ser-580. Positions 578-590 (TPSSVETDISSSR) are enriched in polar residues. The tract at residues 626–740 (GPPCKKSRKE…EEIIVLSDSD (115 aa)) is interaction with SPOP. 2 (Microbial infection) Interaction with Puumala hantavirus nucleoprotein regions span residues 627 to 634 (PPCKKSRK) and 658 to 663 (KNGKKI). A Nuclear localization signal motif is present at residues 628–634 (PCKKSRK). Residues Lys-630 and Lys-631 each participate in a glycyl lysine isopeptide (Lys-Gly) (interchain with G-Cter in SUMO1) cross-link. Over residues 650–660 (ERQRSVHEKNG) the composition is skewed to basic and acidic residues. Phosphoserine is present on residues Ser-668 and Ser-671. Low complexity predominate over residues 673 to 683 (LASLAPVADSS). A phosphoserine mark is found at Ser-688, Ser-702, Ser-737, and Ser-739. The segment covering 693-711 (LVTSSLCIPSPARLSQTPH) has biased composition (polar residues). The segment at 733–740 (IIVLSDSD) is sumo interaction motif (SIM).

The protein belongs to the DAXX family. In terms of assembly, homomultimer. Interacts (via C-terminus) with TNFRSF6 (via death domain). Interacts with PAX5, SLC2A4/GLUT4, MAP3K5, TGFBR2, phosphorylated dimeric HSPB1/HSP27, CENPC, ETS1, sumoylated PML, UBE2I, MCRS1 and TP53. Interacts (via N-terminus) with HIPK2 and HIPK3. Interacts with HIPK1, which induces translocation from PML/POD/ND10 nuclear bodies to chromatin and enhances association with HDAC1. Interacts (non-phosphorylated) with PAX3, PAX7, DEK, HDAC1, HDAC2, HDAC3, acetylated histone H4 and histones H2A, H2B, H3, H3.3 and H4. Interacts with SPOP; mediating CUL3-dependent proteasomal degradation. Interacts with CBP; the interaction is dependent the sumoylation of CBP and suppresses CBP transcriptional activity via recruitment of HDAC2 directly in the complex with TP53 and HIPK2. Interacts with AXIN1; the interaction stimulates the interaction of DAXX with TP53, stimulates 'Ser-46' phosphorylation of TP53 on and induces cell death on UV irradiation. Interacts with MDM2; the interaction is direct. Interacts with USP7; the interaction is direct and independent of MDM2 and TP53. Part of a complex with DAXX, MDM2 and USP7 under non-stress conditions. Interacts (via N-terminus) with RASSF1 (via C-terminus); the interaction is independent of MDM2 and TP53; RASSF1 isoform A disrupts interactions among MDM2, DAXX and USP7, thus contributing to the efficient activation of TP53 by promoting MDM2 self-ubiquitination in cell-cycle checkpoint control in response to DNA damage. Interacts with ATRX to form the chromatin remodeling complex ATRX:DAXX. Interacts with HSF1 (via homotrimeric form preferentially); this interaction relieves homotrimeric HSF1 from repression of its transcriptional activity by HSP90-dependent multichaperone complex upon heat shock. Interacts with SUMO1P1/SUMO5. (Microbial infection) Interacts with human cytomegalovirus/HHV-5 tegument phosphoprotein pp71 and protein UL123. As to quaternary structure, (Microbial infection) Interacts with Epstein-Barr virus protein BNRF1. In terms of assembly, (Microbial infection) Interacts with human adenovirus 5 E1B-55K protein; this interaction might alterate the normal interactions of DAXX, PML, and TP53, which may contribute to cell transformation. (Microbial infection) Interacts with Puumala hantavirus nucleoprotein. Post-translationally, sumoylated with SUMO1 on multiple lysine residues. Phosphorylated by HIPK1 upon glucose deprivation. In terms of processing, polyubiquitinated; which is promoted by CUL3 and SPOP and results in proteasomal degradation. Ubiquitinated by MDM2; inducing its degradation. Deubiquitinated by USP7; leading to stabilize it. As to expression, ubiquitous.

The protein localises to the cytoplasm. It localises to the nucleus. Its subcellular location is the nucleoplasm. It is found in the PML body. The protein resides in the nucleolus. The protein localises to the chromosome. It localises to the centromere. Transcription corepressor known to repress transcriptional potential of several sumoylated transcription factors. Down-regulates basal and activated transcription. Its transcription repressor activity is modulated by recruiting it to subnuclear compartments like the nucleolus or PML/POD/ND10 nuclear bodies through interactions with MCSR1 and PML, respectively. Seems to regulate transcription in PML/POD/ND10 nuclear bodies together with PML and may influence TNFRSF6-dependent apoptosis thereby. Inhibits transcriptional activation of PAX3 and ETS1 through direct protein-protein interactions. Modulates PAX5 activity; the function seems to involve CREBBP. Acts as an adapter protein in a MDM2-DAXX-USP7 complex by regulating the RING-finger E3 ligase MDM2 ubiquitination activity. Under non-stress condition, in association with the deubiquitinating USP7, prevents MDM2 self-ubiquitination and enhances the intrinsic E3 ligase activity of MDM2 towards TP53, thereby promoting TP53 ubiquitination and subsequent proteasomal degradation. Upon DNA damage, its association with MDM2 and USP7 is disrupted, resulting in increased MDM2 autoubiquitination and consequently, MDM2 degradation, which leads to TP53 stabilization. Acts as a histone chaperone that facilitates deposition of histone H3.3. Acts as a targeting component of the chromatin remodeling complex ATRX:DAXX which has ATP-dependent DNA translocase activity and catalyzes the replication-independent deposition of histone H3.3 in pericentric DNA repeats outside S-phase and telomeres, and the in vitro remodeling of H3.3-containing nucleosomes. Does not affect the ATPase activity of ATRX but alleviates its transcription repression activity. Upon neuronal activation associates with regulatory elements of selected immediate early genes where it promotes deposition of histone H3.3 which may be linked to transcriptional induction of these genes. Required for the recruitment of histone H3.3:H4 dimers to PML-nuclear bodies (PML-NBs); the process is independent of ATRX and facilitated by ASF1A; PML-NBs are suggested to function as regulatory sites for the incorporation of newly synthesized histone H3.3 into chromatin. In case of overexpression of centromeric histone variant CENPA (as found in various tumors) is involved in its mislocalization to chromosomes; the ectopic localization involves a heterotypic tetramer containing CENPA, and histones H3.3 and H4 and decreases binding of CTCF to chromatin. Proposed to mediate activation of the JNK pathway and apoptosis via MAP3K5 in response to signaling from TNFRSF6 and TGFBR2. Interaction with HSPB1/HSP27 may prevent interaction with TNFRSF6 and MAP3K5 and block DAXX-mediated apoptosis. In contrast, in lymphoid cells JNC activation and TNFRSF6-mediated apoptosis may not involve DAXX. Shows restriction activity towards human cytomegalovirus (HCMV). Plays a role as a positive regulator of the heat shock transcription factor HSF1 activity during the stress protein response. The protein is Death domain-associated protein 6 (DAXX) of Homo sapiens (Human).